Here is a 66-residue protein sequence, read N- to C-terminus: ATP synthase F(0) complex subunit 8 (66 aa).

A helical transmembrane segment spans residues 8–24 (TWLTMILSMFLTLFIIF). K54 bears the N6-acetyllysine; alternate mark. K54 bears the N6-succinyllysine; alternate mark. N6-acetyllysine is present on K57.

The protein belongs to the ATPase protein 8 family. Component of the ATP synthase complex composed at least of ATP5F1A/subunit alpha, ATP5F1B/subunit beta, ATP5MC1/subunit c (homooctomer), MT-ATP6/subunit a, MT-ATP8/subunit 8, ATP5ME/subunit e, ATP5MF/subunit f, ATP5MG/subunit g, ATP5MK/subunit k, ATP5MJ/subunit j, ATP5F1C/subunit gamma, ATP5F1D/subunit delta, ATP5F1E/subunit epsilon, ATP5PF/subunit F6, ATP5PB/subunit b, ATP5PD/subunit d, ATP5PO/subunit OSCP. ATP synthase complex consists of a soluble F(1) head domain (subunits alpha(3) and beta(3)) - the catalytic core - and a membrane F(0) domain - the membrane proton channel (subunits c, a, 8, e, f, g, k and j). These two domains are linked by a central stalk (subunits gamma, delta, and epsilon) rotating inside the F1 region and a stationary peripheral stalk (subunits F6, b, d, and OSCP). Interacts with PRICKLE3.

The protein localises to the mitochondrion membrane. Its function is as follows. Subunit 8, of the mitochondrial membrane ATP synthase complex (F(1)F(0) ATP synthase or Complex V) that produces ATP from ADP in the presence of a proton gradient across the membrane which is generated by electron transport complexes of the respiratory chain. ATP synthase complex consist of a soluble F(1) head domain - the catalytic core - and a membrane F(1) domain - the membrane proton channel. These two domains are linked by a central stalk rotating inside the F(1) region and a stationary peripheral stalk. During catalysis, ATP synthesis in the catalytic domain of F(1) is coupled via a rotary mechanism of the central stalk subunits to proton translocation. In vivo, can only synthesize ATP although its ATP hydrolase activity can be activated artificially in vitro. Part of the complex F(0) domain. In Bos mutus grunniens (Wild yak), this protein is ATP synthase F(0) complex subunit 8.